The chain runs to 110 residues: Large ribosomal subunit protein uL24 (110 aa).

The protein belongs to the universal ribosomal protein uL24 family. In terms of assembly, part of the 50S ribosomal subunit.

In terms of biological role, one of two assembly initiator proteins, it binds directly to the 5'-end of the 23S rRNA, where it nucleates assembly of the 50S subunit. One of the proteins that surrounds the polypeptide exit tunnel on the outside of the subunit. The protein is Large ribosomal subunit protein uL24 of Caldicellulosiruptor saccharolyticus (strain ATCC 43494 / DSM 8903 / Tp8T 6331).